Here is a 101-residue protein sequence, read N- to C-terminus: Small ribosomal subunit protein uS10 (101 aa).

Belongs to the universal ribosomal protein uS10 family. As to quaternary structure, part of the 30S ribosomal subunit.

Its function is as follows. Involved in the binding of tRNA to the ribosomes. This chain is Small ribosomal subunit protein uS10, found in Mycoplasmopsis synoviae (strain 53) (Mycoplasma synoviae).